Reading from the N-terminus, the 230-residue chain is MPAGGLIVAIDGPSGTGKSTTSRALATRLSAKYLDTGAMYRVATLHVLNQGIDPADSAAVIAATAVLPLSISDDPASTEVLLAGVDVQKDIRGPEVTQNVSAVSAIPEVRENLVALQRALAAKAHRCVVEGRDIGTAVLVDAPIKAFLTASAEVRAQRRFDQDTAAGRDVDFDAVLADVVRRDELDSTRAASPLKPADDAHIVDTSDMTMDQVLDHLIHLVEASAERSNQ.

12–20 (GPSGTGKST) contributes to the ATP binding site.

The protein belongs to the cytidylate kinase family. Type 1 subfamily.

The protein resides in the cytoplasm. It catalyses the reaction CMP + ATP = CDP + ADP. The enzyme catalyses dCMP + ATP = dCDP + ADP. In Corynebacterium glutamicum (strain ATCC 13032 / DSM 20300 / JCM 1318 / BCRC 11384 / CCUG 27702 / LMG 3730 / NBRC 12168 / NCIMB 10025 / NRRL B-2784 / 534), this protein is Cytidylate kinase.